We begin with the raw amino-acid sequence, 134 residues long: Cytochrome b5 (134 aa).

A2 bears the N-acetylalanine mark. Residues K7, K10, and K19 each carry the N6-acetyllysine modification. The Cytochrome b5 heme-binding domain maps to 9 to 85; it reads VKYYTLEEIQ…SKTFIIGELH (77 aa). Heme contacts are provided by H44 and H68. Residues 109-131 form a helical membrane-spanning segment; sequence WWTNWVIPAISALVVSLMYHFYT.

This sequence belongs to the cytochrome b5 family.

Its subcellular location is the endoplasmic reticulum membrane. It is found in the microsome membrane. It localises to the cytoplasm. Its function is as follows. Cytochrome b5 is a membrane-bound hemoprotein functioning as an electron carrier for several membrane-bound oxygenases. In Sus scrofa (Pig), this protein is Cytochrome b5 (CYB5A).